A 78-amino-acid chain; its full sequence is Acyl carrier protein (78 aa).

The Carrier domain occupies Ser2–Ser77. Ser37 is subject to O-(pantetheine 4'-phosphoryl)serine.

The protein belongs to the acyl carrier protein (ACP) family. Post-translationally, 4'-phosphopantetheine is transferred from CoA to a specific serine of apo-ACP by AcpS. This modification is essential for activity because fatty acids are bound in thioester linkage to the sulfhydryl of the prosthetic group.

The protein localises to the cytoplasm. The protein operates within lipid metabolism; fatty acid biosynthesis. Its function is as follows. Carrier of the growing fatty acid chain in fatty acid biosynthesis. The polypeptide is Acyl carrier protein (Photobacterium profundum (strain SS9)).